The following is a 227-amino-acid chain: Putative molybdenum transport system permease protein YvgM (227 aa).

Helical transmembrane passes span 17 to 37 (VVLS…LGTL), 57 to 77 (FMLP…VIFG), 94 to 114 (VIFT…PLMY), 142 to 162 (VFIH…SILS), and 201 to 221 (TLAW…LFFI). The ABC transmembrane type-1 domain occupies 17–221 (VVLSFQVAAV…VISFLMLFFI (205 aa)).

It belongs to the binding-protein-dependent transport system permease family. CysTW subfamily.

Its subcellular location is the cell membrane. Its function is as follows. could be part of the binding-protein-dependent transport system for molybdenum; probably responsible for the translocation of the substrate across the membrane. In Bacillus subtilis (strain 168), this protein is Putative molybdenum transport system permease protein YvgM (yvgM).